The chain runs to 452 residues: Rhodopsin (452 aa).

Topologically, residues 1–33 (MGRDIPDNETWWYNPYMDIHPHWKQFDQVPAAV) are extracellular. N8 is a glycosylation site (N-linked (GlcNAc...) asparagine). Residues 34–58 (YYSLGIFIAICGIIGCVGNGVVIYL) traverse the membrane as a helical segment. The Cytoplasmic segment spans residues 59 to 70 (FTKTKSLQTPAN). The helical transmembrane segment at 71–97 (MFIINLAFSDFTFSLVNGFPLMTISCF) threads the bilayer. Residues 98-109 (MKYWVFGNAACK) lie on the Extracellular side of the membrane. Cysteines 108 and 186 form a disulfide. The helical transmembrane segment at 110 to 131 (VYGLIGGIFGLMSIMTMTMISI) threads the bilayer. The short motif at 132–134 (DRY) is the 'Ionic lock' involved in activated form stabilization element. The Cytoplasmic portion of the chain corresponds to 132–151 (DRYNVIGRPMSASKKMSHRK). A helical transmembrane segment spans residues 152-172 (AFIMIIFVWIWSTIWAIGPIF). At 173–199 (GWGAYTLEGVLCNCSFDYITRDTTTRS) the chain is on the extracellular side. A helical membrane pass occupies residues 200-224 (NILCMYIFAFMCPIVVIFFCYFNIV). Residues 225–261 (MSVSNHEKEMAAMAKRLNAKELRKAQAGANAEMKLAK) are Cytoplasmic-facing. The chain crosses the membrane as a helical span at residues 262–283 (ISIVIVTQFLLSWSPYAVVALL). The Extracellular portion of the chain corresponds to 284–293 (AQFGPIEWVT). A helical transmembrane segment spans residues 294 to 315 (PYAAQLPVMFAKASAIHNPMIY). K305 is subject to N6-(retinylidene)lysine. Over 316–452 (SVSHPKFRER…QGVDNQAYQA (137 aa)) the chain is Cytoplasmic. Residues C336 and C337 are each lipidated (S-palmitoyl cysteine). Disordered regions lie at residues 346–365 (DDKDAEAEIPAGEQSGGETA) and 376–452 (MMQK…AYQA). The segment covering 376 to 388 (MMQKMQAQQQQQP) has biased composition (low complexity). Positions 389-440 (AYPPQGYPPQGYPPPPPQGYPPQGYPPQGYPPQGYPPPPQGPPPQGPPPQAA) are enriched in pro residues.

It belongs to the G-protein coupled receptor 1 family. Opsin subfamily. Contains one covalently linked retinal chromophore. Upon light absorption, the covalently bound 11-cis-retinal is converted to all-trans-retinal. After hydrolysis of the Schiff base and release of the covalently bound all-trans-retinal, active rhodopsin is regenerated by binding of a fresh molecule of 11-cis-retinal.

It localises to the cell projection. The protein resides in the rhabdomere membrane. Photoreceptor required for image-forming vision at low light intensity. Light-induced isomerization of 11-cis to all-trans retinal triggers a conformational change that activates signaling via G-proteins. Signaling mediates the activation of phospholipase C. Subsequent receptor phosphorylation mediates displacement of the bound G-protein alpha subunit by arrestin and terminates signaling. This is Rhodopsin (RHO) from Loligo forbesii (Veined squid).